The sequence spans 419 residues: UDP-N-acetylglucosamine 1-carboxyvinyltransferase (419 aa).

22 to 23 (KN) is a phosphoenolpyruvate binding site. Position 93 (Arg93) interacts with UDP-N-acetyl-alpha-D-glucosamine. Cys117 serves as the catalytic Proton donor. Position 117 is a 2-(S-cysteinyl)pyruvic acid O-phosphothioketal (Cys117). Asp307 and Ile329 together coordinate UDP-N-acetyl-alpha-D-glucosamine.

Belongs to the EPSP synthase family. MurA subfamily.

Its subcellular location is the cytoplasm. It carries out the reaction phosphoenolpyruvate + UDP-N-acetyl-alpha-D-glucosamine = UDP-N-acetyl-3-O-(1-carboxyvinyl)-alpha-D-glucosamine + phosphate. Its pathway is cell wall biogenesis; peptidoglycan biosynthesis. Its function is as follows. Cell wall formation. Adds enolpyruvyl to UDP-N-acetylglucosamine. This is UDP-N-acetylglucosamine 1-carboxyvinyltransferase from Shewanella piezotolerans (strain WP3 / JCM 13877).